The sequence spans 110 residues: uncharacterized protein (110 aa).

This is an uncharacterized protein from Autographa californica nuclear polyhedrosis virus (AcMNPV).